The chain runs to 334 residues: L-lactate dehydrogenase B chain (334 aa).

The residue at position 2 (Ala2) is an N-acetylalanine. Residue Lys7 is modified to N6-acetyllysine. 31–53 lines the NAD(+) pocket; the sequence is QVGMACAISILGKSLADELALVD. Position 44 is a phosphoserine (Ser44). Lys58 bears the N6-acetyllysine mark. Arg100 provides a ligand contact to NAD(+). A substrate-binding site is contributed by Arg107. Position 119 is an N6-acetyllysine (Lys119). Asn139 provides a ligand contact to NAD(+). Residues Asn139 and Arg170 each coordinate substrate. His194 acts as the Proton acceptor in catalysis. At Tyr240 the chain carries Phosphotyrosine. Position 249 (Thr249) interacts with substrate. Lys329 is modified (N6-acetyllysine).

This sequence belongs to the LDH/MDH superfamily. LDH family. In terms of assembly, homotetramer. Interacts with PTEN upstream reading frame protein MP31; the interaction leads to inhibition of mitochondrial lactate dehydrogenase activity, preventing conversion of lactate to pyruvate in mitochondria. As to expression, predominantly expressed in aerobic tissues such as cardiac muscle.

It localises to the cytoplasm. It is found in the mitochondrion inner membrane. It carries out the reaction (S)-lactate + NAD(+) = pyruvate + NADH + H(+). It functions in the pathway fermentation; pyruvate fermentation to lactate; (S)-lactate from pyruvate: step 1/1. Interconverts simultaneously and stereospecifically pyruvate and lactate with concomitant interconversion of NADH and NAD(+). The protein is L-lactate dehydrogenase B chain (LDHB) of Homo sapiens (Human).